Consider the following 370-residue polypeptide: Queuine tRNA-ribosyltransferase (370 aa).

Residue Asp93 is the Proton acceptor of the active site. Residues 93–97 (DSGGF), Asp147, Gln189, and Gly216 each bind substrate. Residues 247–253 (GVGSPDC) form an RNA binding region. Asp266 serves as the catalytic Nucleophile. An RNA binding; important for wobble base 34 recognition region spans residues 271-275 (TRIAR). 4 residues coordinate Zn(2+): Cys304, Cys306, Cys309, and His335.

Belongs to the queuine tRNA-ribosyltransferase family. As to quaternary structure, homodimer. Within each dimer, one monomer is responsible for RNA recognition and catalysis, while the other monomer binds to the replacement base PreQ1. Zn(2+) serves as cofactor.

It carries out the reaction 7-aminomethyl-7-carbaguanine + guanosine(34) in tRNA = 7-aminomethyl-7-carbaguanosine(34) in tRNA + guanine. Its pathway is tRNA modification; tRNA-queuosine biosynthesis. Its function is as follows. Catalyzes the base-exchange of a guanine (G) residue with the queuine precursor 7-aminomethyl-7-deazaguanine (PreQ1) at position 34 (anticodon wobble position) in tRNAs with GU(N) anticodons (tRNA-Asp, -Asn, -His and -Tyr). Catalysis occurs through a double-displacement mechanism. The nucleophile active site attacks the C1' of nucleotide 34 to detach the guanine base from the RNA, forming a covalent enzyme-RNA intermediate. The proton acceptor active site deprotonates the incoming PreQ1, allowing a nucleophilic attack on the C1' of the ribose to form the product. After dissociation, two additional enzymatic reactions on the tRNA convert PreQ1 to queuine (Q), resulting in the hypermodified nucleoside queuosine (7-(((4,5-cis-dihydroxy-2-cyclopenten-1-yl)amino)methyl)-7-deazaguanosine). This chain is Queuine tRNA-ribosyltransferase, found in Pelotomaculum thermopropionicum (strain DSM 13744 / JCM 10971 / SI).